The primary structure comprises 383 residues: Galactokinase (383 aa).

34 to 37 lines the substrate pocket; the sequence is EHTD. An ATP-binding site is contributed by 124-130; it reads GAGLSSS. Mg(2+)-binding residues include Ser130 and Glu162. Asp174 functions as the Proton acceptor in the catalytic mechanism. Tyr223 provides a ligand contact to substrate.

Belongs to the GHMP kinase family. GalK subfamily.

It localises to the cytoplasm. It carries out the reaction alpha-D-galactose + ATP = alpha-D-galactose 1-phosphate + ADP + H(+). The protein operates within carbohydrate metabolism; galactose metabolism. Functionally, catalyzes the transfer of the gamma-phosphate of ATP to D-galactose to form alpha-D-galactose-1-phosphate (Gal-1-P). This chain is Galactokinase, found in Yersinia pseudotuberculosis serotype IB (strain PB1/+).